Here is a 177-residue protein sequence, read N- to C-terminus: Large ribosomal subunit protein uL6 (177 aa).

This sequence belongs to the universal ribosomal protein uL6 family. In terms of assembly, part of the 50S ribosomal subunit.

In terms of biological role, this protein binds to the 23S rRNA, and is important in its secondary structure. It is located near the subunit interface in the base of the L7/L12 stalk, and near the tRNA binding site of the peptidyltransferase center. This chain is Large ribosomal subunit protein uL6, found in Acidovorax ebreus (strain TPSY) (Diaphorobacter sp. (strain TPSY)).